The chain runs to 786 residues: MNERALKVLEFYKIKEKLKGFVKTNAAKDIVDNLKPYTNLYEVEMHLEETMEALDLLQTKGEPPFEGVYDIRDILIRVEKAMVLLPGQLLKVASILKSSRRFKDYVGRKHEETPHKNIEDICEGIELLKGLEESIFNIVISDDEIADRASLKLYGIRRSLRDKNDSLRDRVNSLVRKYSPYLQESIYTIRGDRYVLPVRAEHKGSVPGLVHDQSSSGATLFIEPMSLVNLNNEIKELLLKEREEIERILEELSLKVYNNLDVVNVNAKVIWELDFIFAKAKFASHNNCTLPKVSEDGIVDIIEGKHPLIDTEKVVPTDIYLGKDFTSLIITGPNTGGKTVTLKTLGLIHIMGLSGLLIPAKENSTIAFFEEIFADIGDEQSIEQSLSTFSSHMVNIVDIISKADHKSLVLFDELGAGTDPTEGAALAISILENLRRRKCKIVATTHYSELKGYALKTEDVENASVEFDVETLRPTYRLLIGIPGKSNAFEISKRLGLGEDIIEEAKNNIESDSLKFEALIEKLQSKSIKASDDARRAEMYKLEADRLKDKYEDKLKIVEETREKLLKGAQEEAKKLIKEAKEEADEILKNIRELEKMGYSSTARQKLEEERKKLNSKIHKLEEKEENLNKEKGKKIKEINLGEEVYLPKLDQKVIILSKPDNRGEVQVQAGIMKINVKLDDLRLVDKPKEENKKGRKREAKLRMRTVESEIDLRGMDSMEAVYNTDKYLDEAYVAGLKEVTVIHGKGTGILRKSINDMLKRHPQVKNYRLGEYGEGGTGVTVVELK.

332–339 (GPNTGGKT) contacts ATP. In terms of domain architecture, Smr spans 711–786 (IDLRGMDSME…GTGVTVVELK (76 aa)).

Belongs to the DNA mismatch repair MutS family. MutS2 subfamily. Homodimer. Binds to stalled ribosomes, contacting rRNA.

Functionally, endonuclease that is involved in the suppression of homologous recombination and thus may have a key role in the control of bacterial genetic diversity. Its function is as follows. Acts as a ribosome collision sensor, splitting the ribosome into its 2 subunits. Detects stalled/collided 70S ribosomes which it binds and splits by an ATP-hydrolysis driven conformational change. Acts upstream of the ribosome quality control system (RQC), a ribosome-associated complex that mediates the extraction of incompletely synthesized nascent chains from stalled ribosomes and their subsequent degradation. Probably generates substrates for RQC. The protein is Endonuclease MutS2 of Clostridium tetani (strain Massachusetts / E88).